We begin with the raw amino-acid sequence, 192 residues long: FMN-dependent NADH:quinone oxidoreductase 1 (192 aa).

FMN contacts are provided by residues Ser9 and 15 to 17 (SYS).

The protein belongs to the azoreductase type 1 family. Homodimer. FMN is required as a cofactor.

It catalyses the reaction 2 a quinone + NADH + H(+) = 2 a 1,4-benzosemiquinone + NAD(+). The enzyme catalyses N,N-dimethyl-1,4-phenylenediamine + anthranilate + 2 NAD(+) = 2-(4-dimethylaminophenyl)diazenylbenzoate + 2 NADH + 2 H(+). Quinone reductase that provides resistance to thiol-specific stress caused by electrophilic quinones. In terms of biological role, also exhibits azoreductase activity. Catalyzes the reductive cleavage of the azo bond in aromatic azo compounds to the corresponding amines. This Colwellia psychrerythraea (strain 34H / ATCC BAA-681) (Vibrio psychroerythus) protein is FMN-dependent NADH:quinone oxidoreductase 1.